Consider the following 436-residue polypeptide: 3-ketoacyl-CoA thiolase (436 aa).

Catalysis depends on Cys99, which acts as the Acyl-thioester intermediate. Residues His392 and Cys422 each act as proton acceptor in the active site.

The protein belongs to the thiolase-like superfamily. Thiolase family. In terms of assembly, heterotetramer of two alpha chains (FadJ) and two beta chains (FadI).

Its subcellular location is the cytoplasm. The catalysed reaction is an acyl-CoA + acetyl-CoA = a 3-oxoacyl-CoA + CoA. It functions in the pathway lipid metabolism; fatty acid beta-oxidation. Its function is as follows. Catalyzes the final step of fatty acid oxidation in which acetyl-CoA is released and the CoA ester of a fatty acid two carbons shorter is formed. The sequence is that of 3-ketoacyl-CoA thiolase from Escherichia coli (strain SMS-3-5 / SECEC).